The chain runs to 254 residues: Thiazole synthase (254 aa).

Catalysis depends on lysine 96, which acts as the Schiff-base intermediate with DXP. 1-deoxy-D-xylulose 5-phosphate is bound by residues glycine 157, 183 to 184 (AG), and 205 to 206 (NT).

Belongs to the ThiG family. As to quaternary structure, homotetramer. Forms heterodimers with either ThiH or ThiS.

It is found in the cytoplasm. The enzyme catalyses [ThiS sulfur-carrier protein]-C-terminal-Gly-aminoethanethioate + 2-iminoacetate + 1-deoxy-D-xylulose 5-phosphate = [ThiS sulfur-carrier protein]-C-terminal Gly-Gly + 2-[(2R,5Z)-2-carboxy-4-methylthiazol-5(2H)-ylidene]ethyl phosphate + 2 H2O + H(+). The protein operates within cofactor biosynthesis; thiamine diphosphate biosynthesis. Catalyzes the rearrangement of 1-deoxy-D-xylulose 5-phosphate (DXP) to produce the thiazole phosphate moiety of thiamine. Sulfur is provided by the thiocarboxylate moiety of the carrier protein ThiS. In vitro, sulfur can be provided by H(2)S. The sequence is that of Thiazole synthase from Clostridium perfringens (strain 13 / Type A).